The sequence spans 249 residues: ATP synthase subunit a (249 aa).

The next 5 membrane-spanning stretches (helical) occupy residues 35–55 (ILLT…ISSL), 92–112 (VPFI…GALV), 131–151 (INTT…AGIS), 187–209 (LFGN…PLFI), and 221–241 (SAIQ…EALE).

The protein belongs to the ATPase A chain family. F-type ATPases have 2 components, CF(1) - the catalytic core - and CF(0) - the membrane proton channel. CF(1) has five subunits: alpha(3), beta(3), gamma(1), delta(1), epsilon(1). CF(0) has four main subunits: a, b, b' and c.

It localises to the cellular thylakoid membrane. Functionally, key component of the proton channel; it plays a direct role in the translocation of protons across the membrane. In Trichodesmium erythraeum (strain IMS101), this protein is ATP synthase subunit a.